The chain runs to 560 residues: Leiomodin-3 (560 aa).

Positions 1 to 49 (MSEHSRNSDQEELLDEEINEDEILANLSAEELKELQSEMEVMAPDPSLP) are interaction with tropomyosin alpha. Residues 16 to 42 (EEINEDEILANLSAEELKELQSEMEVM) adopt a coiled-coil conformation. Disordered stretches follow at residues 45-68 (DPSL…NFNH) and 127-217 (IVAN…SKLD). Over residues 142 to 167 (ETDEEDEEEEDDDDDDEGEDDGEESE) the composition is skewed to acidic residues. The span at 168 to 182 (ETNREEEGKAKEQIR) shows a compositional bias: basic and acidic residues. Residues 183-192 (NCENNCQQVT) are compositionally biased toward polar residues. Over residues 194–217 (KAFKEQRDRPEAQEQSEKKISKLD) the composition is skewed to basic and acidic residues. Residues 386-425 (VTNLLTRNQDKQRQKRQEEQKQQQLKEQKKLIAMLENGLG) are a coiled coil. Disordered stretches follow at residues 437–480 (PKPD…KYRT) and 494–530 (QRKS…PPLV). Residues 448–458 (QPPPPRPPNPQ) show a composition bias toward pro residues. A compositionally biased stretch (basic and acidic residues) spans 498 to 516 (RMPEAREPPEKTNLKDVIK). The WH2 domain maps to 534-553 (PRDQLLNDIRHSSVAYLKPV).

It belongs to the tropomodulin family. May interact with tropomyosin alpha (TPM1/2) N-terminus. Interacts with KLHL40; leading to stabilization. In terms of processing, ubiquitinated, leading to its degradation. Interaction with KLHL40 negatively regulates ubiquitination and degradation. Expressed in cardiac and at higher levels in skeletal muscles (at protein level).

It is found in the cytoplasm. The protein localises to the myofibril. Its subcellular location is the sarcomere. It localises to the m line. The protein resides in the a band. It is found in the cytoskeleton. Essential for the organization of sarcomeric actin thin filaments in skeletal muscle. Increases the rate of actin polymerization. This is Leiomodin-3 (LMOD3) from Homo sapiens (Human).